Reading from the N-terminus, the 521-residue chain is Ankyrin repeat and death domain-containing protein 1B (521 aa).

ANK repeat units follow at residues 60–89, 93–122, 126–155, 159–190, 194–223, 227–256, 260–289, 293–322, 326–355, and 359–388; these read AIER…NINA, MNRT…RVDV, HGLT…DQRA, EGMN…DLNQ, RGRK…HTSE, DGNT…EVNE, LNVS…DLQQ, SKEP…DVDV, RRQT…NLKI, and QGKT…YYAW. A Death domain is found at 420-508; the sequence is TLLWNLAYRQ…ELAEKIRQFK (89 aa).

This chain is Ankyrin repeat and death domain-containing protein 1B (Ankdd1b), found in Mus musculus (Mouse).